Consider the following 398-residue polypeptide: Phosphoglycerate kinase (398 aa).

Residues 23 to 25 (DFN), R38, 61 to 64 (HLGK), R122, and R155 each bind substrate. Residues K206, G297, E328, and 354–357 (GGDS) each bind ATP.

The protein belongs to the phosphoglycerate kinase family. As to quaternary structure, monomer.

Its subcellular location is the cytoplasm. The catalysed reaction is (2R)-3-phosphoglycerate + ATP = (2R)-3-phospho-glyceroyl phosphate + ADP. It participates in carbohydrate degradation; glycolysis; pyruvate from D-glyceraldehyde 3-phosphate: step 2/5. This Clostridium kluyveri (strain NBRC 12016) protein is Phosphoglycerate kinase.